Here is an 890-residue protein sequence, read N- to C-terminus: Alanine--tRNA ligase (890 aa).

4 residues coordinate Zn(2+): His568, His572, Cys680, and His684.

This sequence belongs to the class-II aminoacyl-tRNA synthetase family. It depends on Zn(2+) as a cofactor.

Its subcellular location is the cytoplasm. The catalysed reaction is tRNA(Ala) + L-alanine + ATP = L-alanyl-tRNA(Ala) + AMP + diphosphate. Catalyzes the attachment of alanine to tRNA(Ala) in a two-step reaction: alanine is first activated by ATP to form Ala-AMP and then transferred to the acceptor end of tRNA(Ala). Also edits incorrectly charged Ser-tRNA(Ala) and Gly-tRNA(Ala) via its editing domain. The protein is Alanine--tRNA ligase of Psychrobacter cryohalolentis (strain ATCC BAA-1226 / DSM 17306 / VKM B-2378 / K5).